A 691-amino-acid polypeptide reads, in one-letter code: Transcription termination factor Rho (691 aa).

The tract at residues 48-303 (ISDHQRGGSV…PEVDETELTE (256 aa)) is disordered. Residues 50–64 (DHQRGGSVADRDAAE) are compositionally biased toward basic and acidic residues. Composition is skewed to low complexity over residues 65-92 (RAAQ…PAAE) and 105-119 (DTSA…QPQA). Composition is skewed to basic and acidic residues over residues 120 to 158 (EARE…SERR) and 188 to 273 (DADR…EGGR). Residues 307 to 390 (LQPVAGILDV…VKISSVNGQP (84 aa)) form the Rho RNA-BD domain. Residues 433–438 (GKGQRG), 445–450 (KAGKTM), and arginine 476 each bind ATP.

Belongs to the Rho family. Homohexamer. The homohexamer assembles into an open ring structure.

Its function is as follows. Facilitates transcription termination by a mechanism that involves Rho binding to the nascent RNA, activation of Rho's RNA-dependent ATPase activity, and release of the mRNA from the DNA template. This Micrococcus luteus (Micrococcus lysodeikticus) protein is Transcription termination factor Rho.